A 377-amino-acid polypeptide reads, in one-letter code: Putative zinc metalloprotease Atu1380 (377 aa).

Residue His29 coordinates Zn(2+). The active site involves Glu30. Position 33 (His33) interacts with Zn(2+). 3 consecutive transmembrane segments (helical) span residues 118–140 (VAAGPIANFILAILIFAVLFGIY), 299–321 (LGISAVIQLAAVLSVSIGLLNLM), and 351–373 (VAFRIGMMMILGLMVFATWNDIS). The PDZ domain maps to 129 to 202 (AILIFAVLFG…TPITVTVERA (74 aa)).

This sequence belongs to the peptidase M50B family. Zn(2+) is required as a cofactor.

Its subcellular location is the cell inner membrane. This chain is Putative zinc metalloprotease Atu1380, found in Agrobacterium fabrum (strain C58 / ATCC 33970) (Agrobacterium tumefaciens (strain C58)).